Here is a 171-residue protein sequence, read N- to C-terminus: Ferritin heavy chain (171 aa).

Met-1 is modified (N-acetylmethionine). Thr-2 is modified (N-acetylthreonine; in Ferritin heavy chain, N-terminally processed). The 150-residue stretch at 11–160 (QNYHQDSEAA…DHITNLRKMG (150 aa)) folds into the Ferritin-like diiron domain. 5 residues coordinate Fe cation: Glu-28, Glu-63, His-66, Glu-108, and Gln-142.

Belongs to the ferritin family. Oligomer of 24 subunits. There are two types of subunits: L (light) chain and H (heavy) chain. The major chain can be light or heavy, depending on the species and tissue type. The functional molecule forms a roughly spherical shell with a diameter of 12 nm and contains a central cavity into which the insoluble mineral iron core is deposited. Interacts with NCOA4; NCOA4 promotes targeting of the iron-binding ferritin complex to autolysosomes following starvation or iron depletion.

Its subcellular location is the cytoplasm. It localises to the lysosome. It is found in the cytoplasmic vesicle. The protein resides in the autophagosome. The catalysed reaction is 4 Fe(2+) + O2 + 4 H(+) = 4 Fe(3+) + 2 H2O. Stores iron in a soluble, non-toxic, readily available form. Important for iron homeostasis. Has ferroxidase activity. Iron is taken up in the ferrous form and deposited as ferric hydroxides after oxidation. Also plays a role in delivery of iron to cells. Mediates iron uptake in capsule cells of the developing kidney. Delivery to lysosomes is mediated by the cargo receptor NCOA4 for autophagic degradation and release of iron. The protein is Ferritin heavy chain (FTH1) of Ovis aries (Sheep).